Here is a 118-residue protein sequence, read N- to C-terminus: Large ribosomal subunit protein bL19 (118 aa).

The protein belongs to the bacterial ribosomal protein bL19 family.

This protein is located at the 30S-50S ribosomal subunit interface and may play a role in the structure and function of the aminoacyl-tRNA binding site. In Geobacter sulfurreducens (strain ATCC 51573 / DSM 12127 / PCA), this protein is Large ribosomal subunit protein bL19.